The sequence spans 263 residues: MPEGPEIRRAADNLEAAIKGKPLTDVWFAFPQLKTYQSQLIGQHVTHVGTRGKALLTHFSNDLTLYSHNQLYGVWRVVDTGEEPQTTRVLRVKLQTADKTILLYSASDIEMLRPEQLTTHPFLQRVGPDVLDPNLTPEVVKERLLSPRFRNRQFAGLLLDQAFLAGLGNYLRVEILWQVGLTGNHKAKDLNAAQLDALAHALLEIPRFSYATRGQVDENKHHGALFRFKVFHRDGELCERCGGIIEKTTLSSRPFYWCPGCQH.

Residue Pro-2 is the Schiff-base intermediate with DNA of the active site. Glu-3 acts as the Proton donor in catalysis. Catalysis depends on Lys-53, which acts as the Proton donor; for beta-elimination activity. Residues Gln-70, Arg-125, and Asn-169 each coordinate DNA. An FPG-type zinc finger spans residues 229-263 (KVFHRDGELCERCGGIIEKTTLSSRPFYWCPGCQH). Arg-253 serves as the catalytic Proton donor; for delta-elimination activity.

Belongs to the FPG family. The cofactor is Zn(2+).

It carries out the reaction 2'-deoxyribonucleotide-(2'-deoxyribose 5'-phosphate)-2'-deoxyribonucleotide-DNA = a 3'-end 2'-deoxyribonucleotide-(2,3-dehydro-2,3-deoxyribose 5'-phosphate)-DNA + a 5'-end 5'-phospho-2'-deoxyribonucleoside-DNA + H(+). In terms of biological role, involved in base excision repair of DNA damaged by oxidation or by mutagenic agents. Acts as a DNA glycosylase that recognizes and removes damaged bases. Has a preference for oxidized pyrimidines, such as thymine glycol, 5,6-dihydrouracil and 5,6-dihydrothymine. Has AP (apurinic/apyrimidinic) lyase activity and introduces nicks in the DNA strand. Cleaves the DNA backbone by beta-delta elimination to generate a single-strand break at the site of the removed base with both 3'- and 5'-phosphates. This is Endonuclease 8 from Shigella boydii serotype 4 (strain Sb227).